The primary structure comprises 366 residues: 5-hydroxytryptamine receptor 1F (366 aa).

Over 1 to 24 (MDFLNSSDQNLTSEELLHRMPSKI) the chain is Extracellular. 2 N-linked (GlcNAc...) asparagine glycosylation sites follow: N5 and N10. A helical transmembrane segment spans residues 25 to 49 (LVSLTLSGLALMTTTINSLVIAAII). Topologically, residues 50–59 (VTRKLHHPAN) are cytoplasmic. A helical membrane pass occupies residues 60-81 (YLICSLAVTDFLVAVLVMPFSI). The Extracellular segment spans residues 82–96 (VYIVRESWIMGQVLC). A disulfide bond links C96 and C172. Residues 97-119 (DIWLSVDIICCTCSILHLSAIAL) form a helical membrane-spanning segment. Serotonin-binding residues include D103 and C107. The DRY motif; important for ligand-induced conformation changes motif lies at 120–122 (DRY). Residues 120–139 (DRYRAITDAVEYARKRTPKQ) lie on the Cytoplasmic side of the membrane. A helical membrane pass occupies residues 140–159 (AGIMITIVWIISVFISMPPL). The Extracellular segment spans residues 160–178 (FWRHQGTSRDDECIIKHDH). The chain crosses the membrane as a helical span at residues 179 to 202 (IVSTIYSTFGAFYIPLVLILILYY). Over 203–291 (KIYKAAKTLY…KISGTRERKA (89 aa)) the chain is Cytoplasmic. The helical transmembrane segment at 292–315 (ATTLGLILGAFVICWLPFFVKELV) threads the bilayer. The Extracellular segment spans residues 316 to 327 (VNVCEKCKISEE). The helical transmembrane segment at 328–350 (MANFLAWLGYLNSLINPLIYTIF) threads the bilayer. An NPxxY motif; important for ligand-induced conformation changes and signaling motif is present at residues 343-347 (NPLIY). The Cytoplasmic portion of the chain corresponds to 351 to 366 (NEDFKKAFQKLVRCQY).

This sequence belongs to the G-protein coupled receptor 1 family.

It is found in the cell membrane. G-protein coupled receptor for 5-hydroxytryptamine (serotonin). Also functions as a receptor for various alkaloids and psychoactive substances. Ligand binding causes a conformation change that triggers signaling via guanine nucleotide-binding proteins (G proteins) and modulates the activity of downstream effectors, such as adenylate cyclase. HTR1F is coupled to G(i)/G(o) G alpha proteins and mediates inhibitory neurotransmission by inhibiting adenylate cyclase activity. This Cavia porcellus (Guinea pig) protein is 5-hydroxytryptamine receptor 1F (HTR1F).